The following is a 196-amino-acid chain: Ribosome maturation factor RimP (196 aa).

The interval 176 to 196 is disordered; it reads ETNFDEVSTELETDTPSEGDQ. The span at 177–196 shows a compositional bias: acidic residues; that stretch reads TNFDEVSTELETDTPSEGDQ.

Belongs to the RimP family.

It localises to the cytoplasm. In terms of biological role, required for maturation of 30S ribosomal subunits. In Roseobacter denitrificans (strain ATCC 33942 / OCh 114) (Erythrobacter sp. (strain OCh 114)), this protein is Ribosome maturation factor RimP.